The chain runs to 296 residues: Glycine--tRNA ligase alpha subunit (296 aa).

It belongs to the class-II aminoacyl-tRNA synthetase family. As to quaternary structure, tetramer of two alpha and two beta subunits.

It localises to the cytoplasm. It carries out the reaction tRNA(Gly) + glycine + ATP = glycyl-tRNA(Gly) + AMP + diphosphate. The sequence is that of Glycine--tRNA ligase alpha subunit from Francisella tularensis subsp. novicida (strain U112).